A 380-amino-acid chain; its full sequence is Protein Wnt-5a (380 aa).

A signal peptide spans 1–37; it reads MKKPIGILSPGVALGTAGGAMSSKFFLMALATFFSFA. Residues 38–61 constitute a propeptide that is removed on maturation; sequence QVVIEANSWWSLGMNNPVQMSEVH. Cys-104 and Cys-115 are joined by a disulfide. N-linked (GlcNAc...) asparagine glycosylation is found at Asn-114 and Asn-120. Intrachain disulfides connect Cys-154–Cys-162, Cys-164–Cys-182, Cys-238–Cys-252, Cys-240–Cys-247, Cys-309–Cys-340, Cys-325–Cys-335, Cys-339–Cys-379, Cys-355–Cys-370, Cys-357–Cys-367, and Cys-362–Cys-363. A lipid anchor (O-palmitoleoyl serine; by PORCN) is attached at Ser-244. N-linked (GlcNAc...) asparagine glycosylation is found at Asn-312 and Asn-326.

It belongs to the Wnt family. Forms a soluble 1:1 complex with AFM; this prevents oligomerization and is required for prolonged biological activity. The complex with AFM may represent the physiological form in body fluids. Homooligomer; disulfide-linked, leading to inactivation (in vitro). Interacts with PORCN. Interacts with WLS. Interacts with glypican GCP3. Interacts with PKD1 (via extracellular domain). Interacts with TMEM67. Post-translationally, glycosylation is necessary for secretion but not for activity. Palmitoleoylation is required for efficient binding to frizzled receptors. Depalmitoleoylation leads to Wnt signaling pathway inhibition. In terms of processing, proteolytic processing by TIKI1 and TIKI2 promotes oxidation and formation of large disulfide-bond oligomers, leading to inactivation of WNT5A.

Its subcellular location is the secreted. The protein resides in the extracellular space. It localises to the extracellular matrix. Functionally, ligand for members of the frizzled family of seven transmembrane receptors. Can activate or inhibit canonical Wnt signaling, depending on receptor context. In the presence of FZD4, activates beta-catenin signaling. In the presence of ROR2, inhibits the canonical Wnt pathway by promoting beta-catenin degradation through a GSK3-independent pathway which involves down-regulation of beta-catenin-induced reporter gene expression. Suppression of the canonical pathway allows chondrogenesis to occur and inhibits tumor formation. Stimulates cell migration. Decreases proliferation, migration, invasiveness and clonogenicity of carcinoma cells and may act as a tumor suppressor. Mediates motility of melanoma cells. Required during embryogenesis for extension of the primary anterior-posterior axis and for outgrowth of limbs and the genital tubercle. Inhibits type II collagen expression in chondrocytes. The protein is Protein Wnt-5a (Wnt5a) of Rattus norvegicus (Rat).